Consider the following 1456-residue polypeptide: ABC-type transporter eriD (1456 aa).

The disordered stretch occupies residues M1–K65. The segment covering S30–Y40 has biased composition (polar residues). Residues L118–P372 enclose the ABC transporter 1 domain. Transmembrane regions (helical) follow at residues N481 to Y501, A515 to I535, V561 to F581, G590 to F610, A623 to P643, and I734 to A754. Positions E775–K799 are disordered. The ABC transporter 2 domain occupies F813 to A1056. An ATP-binding site is contributed by G849–T856. Transmembrane regions (helical) follow at residues Y1148–F1168, V1184–T1204, L1233–M1253, L1269–I1289, I1301–G1321, P1337–C1357, and F1423–L1443.

This sequence belongs to the ABC transporter superfamily. ABCG family. PDR (TC 3.A.1.205) subfamily.

It localises to the membrane. Functionally, ABC-type transporter; part of the gene cluster that mediates the biosynthesis of erinacines, cyathane-xylosides that show unique biological activities, including leishmanicidal activity, stimulating activity for nerve growth-factor synthesis, and agonistic activity toward the kappa opioid receptor. The protein is ABC-type transporter eriD of Hericium erinaceus (Lion's mane mushroom).